The sequence spans 234 residues: Ribosomal RNA small subunit methyltransferase G (234 aa).

Residues Gly96, Leu101, 119–121 (DAT), 147–148 (VE), and Arg161 each bind S-adenosyl-L-methionine.

Belongs to the methyltransferase superfamily. RNA methyltransferase RsmG family.

It is found in the cytoplasm. Its function is as follows. Specifically methylates the N7 position of a guanine in 16S rRNA. The polypeptide is Ribosomal RNA small subunit methyltransferase G (Chlorobium chlorochromatii (strain CaD3)).